A 465-amino-acid polypeptide reads, in one-letter code: Tapasin (465 aa).

The signal sequence occupies residues 1-23 (MKPLLLLVAVALGLATVVSVVSA). The Lumenal segment spans residues 24–416 (GPEAIECWFV…GFSGPSIEDG (393 aa)). Residues cysteine 30 and cysteine 94 are joined by a disulfide bond. Asparagine 256 carries N-linked (GlcNAc...) asparagine glycosylation. The Ig-like C1-type domain maps to 295–402 (PRVSLTPAPV…PASGRSADVT (108 aa)). The cysteines at positions 318 and 385 are disulfide-linked. Residues 417-437 (IGLFLSAFLLLGLLKVLGWLA) form a helical membrane-spanning segment. The Cytoplasmic portion of the chain corresponds to 438–465 (AYWTIPEVSKEKATAASLTIPRNSKKSQ).

Heterodimer with PDIA3; disulfide-linked. Obligatory mediator for the interaction between newly assembled MHC class I molecules, calreticulin, PDIA3 and TAP. Up to 4 MHC class I/tapasin complexes bind to 1 TAP. Interacts with HLA-G-B2M complex; this interaction is required for loading of high affinity peptides. On its own or as part of MHC class I peptide loading complex, interacts with ligand-free MR1 or MR1-B2M complex, providing for stable MR1 pools ready for metabolite antigen processing.

Its subcellular location is the endoplasmic reticulum membrane. Involved in the association of MHC class I with transporter associated with antigen processing (TAP) and in the assembly of MHC class I with peptide (peptide loading). This chain is Tapasin (Tapbp), found in Mus musculus (Mouse).